The primary structure comprises 1365 residues: DNA-directed RNA polymerase subunit beta' (1365 aa).

Positions 249, 316, 323, and 326 each coordinate Zn(2+).

It belongs to the RNA polymerase beta' chain family. RpoC2 subfamily. In terms of assembly, in cyanobacteria the RNAP catalytic core is composed of 2 alpha, 1 beta, 1 beta', 1 gamma and 1 omega subunit. When a sigma factor is associated with the core the holoenzyme is formed, which can initiate transcription. Requires Zn(2+) as cofactor.

It catalyses the reaction RNA(n) + a ribonucleoside 5'-triphosphate = RNA(n+1) + diphosphate. DNA-dependent RNA polymerase catalyzes the transcription of DNA into RNA using the four ribonucleoside triphosphates as substrates. This chain is DNA-directed RNA polymerase subunit beta', found in Synechococcus sp. (strain CC9311).